A 242-amino-acid chain; its full sequence is Protein MHF1 homolog (242 aa).

Residues 208 to 242 (LKAKEPQSERKRKKGSAKKEDKASSSNAVRITTDL) form a disordered region. The span at 231-242 (SSSNAVRITTDL) shows a compositional bias: polar residues.

It belongs to the TAF9 family. CENP-S/MHF1 subfamily.

The protein localises to the nucleus. Functionally, involved in the promotion of spontaneous somatic homologous recombination (HR) events, which is opposite to the function of FANCM in ordered HR. Only FANCM is essential for replicative repair in the absence of the endonuclease MUS81. Acts in the same pathway as FANCM to restrain class II meiotic crossing over (CO), and acts with FANCM during meiosis to repair interstrand cross-links (ICLs). This common pathway between MHF1 and FANCM is in parallel to the pathway that involves the RECQ4A helicase. The sequence is that of Protein MHF1 homolog from Arabidopsis thaliana (Mouse-ear cress).